Reading from the N-terminus, the 188-residue chain is Antitoxin SocA (188 aa).

As to quaternary structure, interacts with cognate toxin SocB and with ClpX.

Functionally, antitoxin component of an atypical type II toxin-antitoxin (TA) system. Unlike most type II TA systems, neutralizes the toxic activity of cognate toxin SocB by acting as an adapter to promote its degradation by ClpXP; degradation is dependent on the N-terminus of ClpX. This chain is Antitoxin SocA, found in Caulobacter vibrioides (strain NA1000 / CB15N) (Caulobacter crescentus).